The following is a 126-amino-acid chain: Holo-[acyl-carrier-protein] synthase (126 aa).

Residues Asp9 and Glu59 each coordinate Mg(2+).

It belongs to the P-Pant transferase superfamily. AcpS family. Requires Mg(2+) as cofactor.

The protein localises to the cytoplasm. The catalysed reaction is apo-[ACP] + CoA = holo-[ACP] + adenosine 3',5'-bisphosphate + H(+). Transfers the 4'-phosphopantetheine moiety from coenzyme A to a Ser of acyl-carrier-protein. The sequence is that of Holo-[acyl-carrier-protein] synthase from Myxococcus xanthus (strain DK1622).